The chain runs to 539 residues: Glutathione synthetase, chloroplastic (539 aa).

The transit peptide at 1–61 (MGSGCSSLSY…SPLRCGRSFK (61 aa)) directs the protein to the chloroplast. Residue Arg193 coordinates substrate. Glu209 provides a ligand contact to ATP. Mg(2+) is bound by residues Glu209 and Asn211. Substrate-binding positions include 213 to 216 (ISCS), 281 to 283 (ERN), Gln287, and 335 to 338 (RSGY). ATP-binding positions include Lys374, 428–437 (KPQREGGGNN), Tyr439, 464–467 (MQRI), and Glu490. Mg(2+) is bound at residue Glu432. A substrate-binding site is contributed by Arg515. The ATP site is built by Lys517 and Glu523. 526–527 (VA) lines the substrate pocket.

The protein belongs to the eukaryotic GSH synthase family. As to quaternary structure, homodimer. The cofactor is Mg(2+).

It localises to the plastid. The protein localises to the chloroplast. The enzyme catalyses gamma-L-glutamyl-L-cysteine + glycine + ATP = glutathione + ADP + phosphate + H(+). It participates in sulfur metabolism; glutathione biosynthesis; glutathione from L-cysteine and L-glutamate: step 2/2. The sequence is that of Glutathione synthetase, chloroplastic (GSH2) from Arabidopsis thaliana (Mouse-ear cress).